The following is a 542-amino-acid chain: Putative inactive cadmium/zinc-transporting ATPase HMA3 (542 aa).

Over 1 to 89 (MAEGEESKKM…VRPYGETSLK (89 aa)) the chain is Cytoplasmic. The region spanning 13–79 (QTSYFDVVGI…ALNQARLEAS (67 aa)) is the HMA domain. The helical transmembrane segment at 90-111 (SQWPSPFAIVSGVLLVLSFFKY) threads the bilayer. Residues 112–114 (FYS) lie on the Extracellular side of the membrane. A helical membrane pass occupies residues 115–134 (PLEWLAIVAVVAGVFPILAK). At 135–141 (AVASVTR) the chain is on the cytoplasmic side. A helical membrane pass occupies residues 142–162 (FRLDINALTLIAVIATLCMQD). A topological domain (extracellular) is located at residue Phe-163. A helical membrane pass occupies residues 164-184 (TEAATIVFLFSVADWLESSAA). Residues 185–310 (HKASIVMSSL…QTKTQRFIDK (126 aa)) lie on the Cytoplasmic side of the membrane. Residues 311–333 (CSRYYTPAVVVSAACFAVIPVLL) form a helical membrane-spanning segment. The Extracellular segment spans residues 334 to 341 (KVQDLSHW). A helical membrane pass occupies residues 342–359 (FHLALVVLVSGCPCGLIL). At 360–542 (STPVATFCAL…VAQALKELKS (183 aa)) the chain is on the cytoplasmic side.

Belongs to the cation transport ATPase (P-type) (TC 3.A.3) family. Type IB subfamily.

Its subcellular location is the membrane. This chain is Putative inactive cadmium/zinc-transporting ATPase HMA3 (HMA3), found in Arabidopsis thaliana (Mouse-ear cress).